The primary structure comprises 461 residues: Photosystem II CP43 reaction center protein (461 aa).

Positions 1–2 are excised as a propeptide; that stretch reads ME. Position 3 is an N-acetylthreonine (threonine 3). Threonine 3 is subject to Phosphothreonine. 5 consecutive transmembrane segments (helical) span residues 57–81, 122–143, 166–188, 243–263, and 279–300; these read LFEV…PHLA, LLGP…KDRN, KALY…RKIT, KPFA…LSYS, and WFNN…ASQA. A [CaMn4O5] cluster-binding site is contributed by glutamate 355. A helical transmembrane segment spans residues 435 to 459; that stretch reads RARAAAAGFEKGIDRDFEPVLSMTP.

The protein belongs to the PsbB/PsbC family. PsbC subfamily. In terms of assembly, PSII is composed of 1 copy each of membrane proteins PsbA, PsbB, PsbC, PsbD, PsbE, PsbF, PsbH, PsbI, PsbJ, PsbK, PsbL, PsbM, PsbT, PsbX, PsbY, PsbZ, Psb30/Ycf12, at least 3 peripheral proteins of the oxygen-evolving complex and a large number of cofactors. It forms dimeric complexes. The cofactor is Binds multiple chlorophylls and provides some of the ligands for the Ca-4Mn-5O cluster of the oxygen-evolving complex. It may also provide a ligand for a Cl- that is required for oxygen evolution. PSII binds additional chlorophylls, carotenoids and specific lipids..

The protein localises to the plastid. The protein resides in the chloroplast thylakoid membrane. One of the components of the core complex of photosystem II (PSII). It binds chlorophyll and helps catalyze the primary light-induced photochemical processes of PSII. PSII is a light-driven water:plastoquinone oxidoreductase, using light energy to abstract electrons from H(2)O, generating O(2) and a proton gradient subsequently used for ATP formation. This is Photosystem II CP43 reaction center protein from Nicotiana sylvestris (Wood tobacco).